Reading from the N-terminus, the 140-residue chain is Nucleoside diphosphate kinase (140 aa).

Residues lysine 11, phenylalanine 59, arginine 87, threonine 93, arginine 104, and asparagine 114 each contribute to the ATP site. Histidine 117 acts as the Pros-phosphohistidine intermediate in catalysis.

Belongs to the NDK family. In terms of assembly, homotetramer. It depends on Mg(2+) as a cofactor.

It localises to the cytoplasm. The catalysed reaction is a 2'-deoxyribonucleoside 5'-diphosphate + ATP = a 2'-deoxyribonucleoside 5'-triphosphate + ADP. It carries out the reaction a ribonucleoside 5'-diphosphate + ATP = a ribonucleoside 5'-triphosphate + ADP. In terms of biological role, major role in the synthesis of nucleoside triphosphates other than ATP. The ATP gamma phosphate is transferred to the NDP beta phosphate via a ping-pong mechanism, using a phosphorylated active-site intermediate. This is Nucleoside diphosphate kinase from Methylorubrum extorquens (strain CM4 / NCIMB 13688) (Methylobacterium extorquens).